The following is a 388-amino-acid chain: Chaperone protein DnaJ (388 aa).

The J domain maps to 5–70 (DYYTTLNISN…KKRNLYDQYG (66 aa)). The CR-type zinc finger occupies 135 to 213 (GIKKEIRIPK…CFGQGRIKKS (79 aa)). Cys-148, Cys-151, Cys-165, Cys-168, Cys-187, Cys-190, Cys-201, and Cys-204 together coordinate Zn(2+). 4 CXXCXGXG motif repeats span residues 148-155 (CQSCYGYG), 165-172 (CTSCNGHG), 187-194 (CSTCRGTG), and 201-208 (CKICFGQG).

The protein belongs to the DnaJ family. In terms of assembly, homodimer. Zn(2+) is required as a cofactor.

The protein localises to the cytoplasm. Its function is as follows. Participates actively in the response to hyperosmotic and heat shock by preventing the aggregation of stress-denatured proteins and by disaggregating proteins, also in an autonomous, DnaK-independent fashion. Unfolded proteins bind initially to DnaJ; upon interaction with the DnaJ-bound protein, DnaK hydrolyzes its bound ATP, resulting in the formation of a stable complex. GrpE releases ADP from DnaK; ATP binding to DnaK triggers the release of the substrate protein, thus completing the reaction cycle. Several rounds of ATP-dependent interactions between DnaJ, DnaK and GrpE are required for fully efficient folding. Also involved, together with DnaK and GrpE, in the DNA replication of plasmids through activation of initiation proteins. The protein is Chaperone protein DnaJ of Buchnera aphidicola subsp. Cinara cedri (strain Cc).